We begin with the raw amino-acid sequence, 1020 residues long: MGRGAGREYSPAATTAENGGGKKKQKEKELDELKKEVAMDDHKLSLDELGRKYQVDLSKGLTNQRAQDILARDGPNALTPPPTTPEWVKFCRQLFGGFSILLWIGALLCFLAYGILAAMEDEPSNDNLYLGIVLAAVVIVTGCFSYYQEAKSSKIMDSFKNMVPQQALVIREGEKMQINAEEVVVGDLVEVKGGDRVPADLRIISSHGCKVDNSSLTGESEPQTRSPEFTHENPLETRNICFFSTNCVEGTARGIVIATGDRTVMGRIATLASGLEVGQTPIAMEIEHFIQLITGVAVFLGVSFFVLSLILGYSWLEAVIFLIGIIVANVPEGLLATVTVCLTLTAKRMARKNCLVKNLEAVETLGSTSTICSDKTGTLTQNRMTVAHMWFDNQIHEADTTEDQSGATFDKRSPTWTALSRIAGLCNRAVFKAGQENISVSKRDTAGDASESALLKCIELSCGSVRKMRDRNPKVAEIPFNSTNKYQLSIHEREDSPQSHVLVMKGAPERILDRCSTILVQGKEIPLDKEMQDAFQNAYMELGGLGERVLGFCQLNLPSGKFPRGFKFDTDELNFPTEKLCFVGLMSMIDPPRAAVPDAVGKCRSAGIKVIMVTGDHPITAKAIAKGVGIISEGNETVEDIAARLNIPVSQVNPREAKACVVHGSDLKDMTSEQLDEILRDHTEIVFARTSPQQKLIIVEGCQRQGAIVAVTGDGVNDSPALKKADIGIAMGISGSDVSKQAADMILLDDNFASIVTGVEEGRLIFDNLKKSIAYTLTSNIPEITPFLLFIIANIPLPLGTVTILCIDLGTDMVPAISLAYEAAESDIMKRQPRNSQTDKLVNERLISMAYGQIGMIQALGGFFTYFVILAENGFLPSRLLGIRLDWDDRTTNDLEDSYGQEWTYEQRKVVEFTCHTAFFASIVVVQWADLIICKTRRNSVFQQGMKNKILIFGLLEETALAAFLSYCPGMGVALRMYPLKVTWWFCAFPYSLLIFIYDEVRKLILRRYPGGWVEKETYY.

A propeptide spanning residues 1-5 (MGRGA) is cleaved from the precursor. Residues 1–31 (MGRGAGREYSPAATTAENGGGKKKQKEKELD) form a disordered region. Residues 6–85 (GREYSPAATT…NALTPPPTTP (80 aa)) are Cytoplasmic-facing. A Phosphoserine modification is found at Ser-10. The tract at residues 80-82 (PPP) is interaction with phosphoinositide-3 kinase. A helical membrane pass occupies residues 86–106 (EWVKFCRQLFGGFSILLWIGA). Residues 107-129 (LLCFLAYGILAAMEDEPSNDNLY) are Extracellular-facing. A helical transmembrane segment spans residues 130 to 150 (LGIVLAAVVIVTGCFSYYQEA). The Cytoplasmic segment spans residues 151 to 286 (KSSKIMDSFK…VGQTPIAMEI (136 aa)). A compositionally biased stretch (polar residues) spans 212 to 227 (DNSSLTGESEPQTRSP). Residues 212-231 (DNSSLTGESEPQTRSPEFTH) form a disordered region. A helical membrane pass occupies residues 287–306 (EHFIQLITGVAVFLGVSFFV). Residues 307-318 (LSLILGYSWLEA) are Extracellular-facing. The helical transmembrane segment at 319–336 (VIFLIGIIVANVPEGLLA) threads the bilayer. Residues 337 to 769 (TVTVCLTLTA…EEGRLIFDNL (433 aa)) are Cytoplasmic-facing. Asp-374 (4-aspartylphosphate intermediate) is an active-site residue. Phosphoserine occurs at positions 439, 450, 496, and 559. Thr-570 bears the Phosphothreonine mark. Residues Ser-587 and Ser-672 each carry the phosphoserine modification. 2 residues coordinate Mg(2+): Asp-714 and Asp-718. A helical transmembrane segment spans residues 770–789 (KKSIAYTLTSNIPEITPFLL). Residues 790-799 (FIIANIPLPL) lie on the Extracellular side of the membrane. Residues 800-820 (GTVTILCIDLGTDMVPAISLA) form a helical membrane-spanning segment. Over 821–840 (YEAAESDIMKRQPRNSQTDK) the chain is Cytoplasmic. The residue at position 826 (Ser-826) is a Phosphoserine. The chain crosses the membrane as a helical span at residues 841–863 (LVNERLISMAYGQIGMIQALGGF). Topologically, residues 864 to 915 (FTYFVILAENGFLPSRLLGIRLDWDDRTTNDLEDSYGQEWTYEQRKVVEFTC) are extracellular. A helical membrane pass occupies residues 916–935 (HTAFFASIVVVQWADLIICK). Over 936 to 948 (TRRNSVFQQGMKN) the chain is Cytoplasmic. Ser-940 carries the phosphoserine; by PKA modification. The helical transmembrane segment at 949-967 (KILIFGLLEETALAAFLSY) threads the bilayer. The Extracellular portion of the chain corresponds to 968–982 (CPGMGVALRMYPLKV). Residues 983–1003 (TWWFCAFPYSLLIFIYDEVRK) traverse the membrane as a helical segment. At 1004 to 1020 (LILRRYPGGWVEKETYY) the chain is on the cytoplasmic side.

It belongs to the cation transport ATPase (P-type) (TC 3.A.3) family. Type IIC subfamily. In terms of assembly, the sodium/potassium-transporting ATPase is composed of a catalytic alpha subunit, an auxiliary non-catalytic beta subunit and an additional regulatory subunit. Interacts with regulatory subunit FXYD1.

The protein localises to the membrane. Its subcellular location is the cell membrane. It catalyses the reaction K(+)(out) + Na(+)(in) + ATP + H2O = K(+)(in) + Na(+)(out) + ADP + phosphate + H(+). In terms of biological role, this is the catalytic component of the active enzyme, which catalyzes the hydrolysis of ATP coupled with the exchange of sodium and potassium ions across the plasma membrane. This action creates the electrochemical gradient of sodium and potassium ions, providing the energy for active transport of various nutrients. The chain is Sodium/potassium-transporting ATPase subunit alpha-2 (Atp1a2) from Mus musculus (Mouse).